Reading from the N-terminus, the 448-residue chain is Chromosomal replication initiator protein DnaA 1 (448 aa).

Residues 1–76 form a domain I, interacts with DnaA modulators region; sequence MLTSETQNVW…FLPVDMSGEP (76 aa). A domain II region spans residues 76-111; it reads PAIRFIIAPPQKKIIPPNHFSISSSQKEEQSPNSDV. A domain III, AAA+ region region spans residues 112 to 328; the sequence is KLNNNYRFEN…GAINRLSAHC (217 aa). ATP contacts are provided by G156, G158, K159, and T160. The interval 329–448 is domain IV, binds dsDNA; the sequence is RLLDLNITEE…IGMVRRNIES (120 aa).

It belongs to the DnaA family. Oligomerizes as a right-handed, spiral filament on DNA at oriC.

It localises to the cytoplasm. In terms of biological role, plays an essential role in the initiation and regulation of chromosomal replication. ATP-DnaA binds to the origin of replication (oriC) to initiate formation of the DNA replication initiation complex once per cell cycle. Binds the DnaA box (a 9 base pair repeat at the origin) and separates the double-stranded (ds)DNA. Forms a right-handed helical filament on oriC DNA; dsDNA binds to the exterior of the filament while single-stranded (ss)DNA is stabiized in the filament's interior. The ATP-DnaA-oriC complex binds and stabilizes one strand of the AT-rich DNA unwinding element (DUE), permitting loading of DNA polymerase. After initiation quickly degrades to an ADP-DnaA complex that is not apt for DNA replication. Binds acidic phospholipids. In Protochlamydia amoebophila (strain UWE25), this protein is Chromosomal replication initiator protein DnaA 1.